The following is a 636-amino-acid chain: Endoglucanase 4 (636 aa).

A signal peptide spans 1-25 (MTRRWSFLVQCFTFKKKEGVRSRYM). Residue aspartate 82 is the Nucleophile of the active site. Catalysis depends on residues histidine 400, aspartate 438, and glutamate 447. In terms of domain architecture, CBM3 spans 478–635 (KVEDEFFVEA…GDLVFGTLPN (158 aa)).

This sequence belongs to the glycosyl hydrolase 9 (cellulase E) family.

It localises to the secreted. It carries out the reaction Endohydrolysis of (1-&gt;4)-beta-D-glucosidic linkages in cellulose, lichenin and cereal beta-D-glucans.. The chain is Endoglucanase 4 from Bacillus sp. (strain KSM-522).